Here is a 491-residue protein sequence, read N- to C-terminus: Nucleoside transporter 1.2 (491 aa).

6 helical membrane-spanning segments follow: residues 27–47, 82–102, 109–129, 136–156, 173–193, and 209–229; these read FYVYVVAFMCGVSMMMSVNAV, YNLIGIVTSLIMEPLTLLSWF, VRLLGGLVILIVEIIVLMVVP, AGAVATICCTGFIGGFGKSIF, STMMGGVGMSGVLTSLLQIIV, and KIYYGLDVGIQGMTFVALILL. Residues 261-273 show a composition bias toward basic and acidic residues; that stretch reads HTDEHPTHDKEGR. Disordered stretches follow at residues 261 to 280 and 290 to 309; these read HTDEHPTHDKEGRNSSSGKE and AAAKSEGPDAVEESSWPHEV. The N-linked (GlcNAc...) asparagine glycan is linked to Asn-274. The next 5 helical transmembrane spans lie at 333–353, 361–381, 395–415, 427–447, and 460–480; these read MFVACAFNFLITLFLFPGIAV, WFSTIAVFIFNVFDVLGRFSP, WIIVAASFARVIFVPLLLLHS, VMEVIFGFSNGYVGSMALVLG, and FVAGTLMGISILVGGTIGTVL.

This sequence belongs to the SLC29A/ENT transporter (TC 2.A.57) family.

The protein localises to the membrane. The catalysed reaction is adenosine(in) + H(+)(in) = adenosine(out) + H(+)(out). It catalyses the reaction uridine(in) + H(+)(in) = uridine(out) + H(+)(out). In terms of biological role, sodium-independent nucleoside:H(+) symporter; transports adenosine with high affinity and uridine with moderate affinity. Can transport cytidine and thymidine. The sequence is that of Nucleoside transporter 1.2 from Leishmania donovani.